A 201-amino-acid chain; its full sequence is dITP/XTP pyrophosphatase (201 aa).

8–13 (TTNENK) serves as a coordination point for substrate. Aspartate 68 functions as the Proton acceptor in the catalytic mechanism. Aspartate 68 lines the Mg(2+) pocket. Residues serine 69, 155–158 (FGYD), lysine 177, and 182–183 (HR) contribute to the substrate site.

Belongs to the HAM1 NTPase family. Homodimer. Mg(2+) serves as cofactor.

It carries out the reaction XTP + H2O = XMP + diphosphate + H(+). It catalyses the reaction dITP + H2O = dIMP + diphosphate + H(+). The enzyme catalyses ITP + H2O = IMP + diphosphate + H(+). Pyrophosphatase that catalyzes the hydrolysis of nucleoside triphosphates to their monophosphate derivatives, with a high preference for the non-canonical purine nucleotides XTP (xanthosine triphosphate), dITP (deoxyinosine triphosphate) and ITP. Seems to function as a house-cleaning enzyme that removes non-canonical purine nucleotides from the nucleotide pool, thus preventing their incorporation into DNA/RNA and avoiding chromosomal lesions. In Borrelia garinii subsp. bavariensis (strain ATCC BAA-2496 / DSM 23469 / PBi) (Borreliella bavariensis), this protein is dITP/XTP pyrophosphatase.